A 172-amino-acid chain; its full sequence is Small ribosomal subunit protein uS5 (172 aa).

The S5 DRBM domain occupies 17–80 (LREKMIAVNR…DEARRKMIKV (64 aa)).

The protein belongs to the universal ribosomal protein uS5 family. Part of the 30S ribosomal subunit. Contacts proteins S4 and S8.

With S4 and S12 plays an important role in translational accuracy. Its function is as follows. Located at the back of the 30S subunit body where it stabilizes the conformation of the head with respect to the body. The protein is Small ribosomal subunit protein uS5 of Polynucleobacter asymbioticus (strain DSM 18221 / CIP 109841 / QLW-P1DMWA-1) (Polynucleobacter necessarius subsp. asymbioticus).